A 669-amino-acid chain; its full sequence is MAAERSRSPVDSPVPASMFAPEPSSPGAARAAAAAARLHGGFDSDCSEDGEALNGEPELDLTSKLVLVSPTSEQYDSLLRQMWERMDEGCGETIYVIGQGSDGTEYGLSEADMEASYATVKSMAEQIEADVILLRERQESGGRVRDYLVRKRVGDNDFLEVRVAVVGNVDAGKSTLLGVLTHGELDNGRGFARQKLFRHKHEIESGRTSSVGNDILGFDSEGNVVNKPDSHGGSLEWTKICEKSSKVITFIDLAGHEKYLKTTVFGMTGHLPDFCMLMVGSNAGIVGMTKEHLGLALALNVPVFVVVTKIDMCPANILQETLKLLQRLLKSPGCRKIPVLVQSKDDVIVTASNFSSERMCPIFQISNVTGENLDLLKMFLNLLSPRTSYREEEPAEFQIDDTYSVPGVGTVVSGTTLRGLIKLNDTLLLGPDPLGNFLSIAVKSIHRKRMPVKEVRGGQTASFALKKIKRSSIRKGMVMVSPRLNPQASWEFEAEILVLHHPTTISPRYQAMVHCGSIRQTATILSMDKDCLRTGDKATVHFRFIKTPEYLHIDQRLVFREGRTKAVGTITKLLQTTNNSPMNSKPQQIKMQSTKKGPLSKREEGGPSGVPAAGPPSTGDEASSLGTTQAATSSGLQPQPKPSSGGRRRGGQRHKVKSQGACVTPASGC.

The interval 1-32 (MAAERSRSPVDSPVPASMFAPEPSSPGAARAA) is disordered. Ser-6, Ser-8, Ser-12, Ser-24, Ser-25, Ser-44, Ser-47, and Ser-69 each carry phosphoserine. The 232-residue stretch at 158–389 (FLEVRVAVVG…LNLLSPRTSY (232 aa)) folds into the tr-type G domain. Residues 167–174 (GNVDAGKS) form a G1 region. 167–174 (GNVDAGKS) contributes to the GTP binding site. A G2 region spans residues 206 to 210 (GRTSS). The G3 stretch occupies residues 252-255 (DLAG). Residues 252-256 (DLAGH) and 308-311 (TKID) contribute to the GTP site. The tract at residues 308–311 (TKID) is G4. The tract at residues 366 to 368 (SNV) is G5. Composition is skewed to polar residues over residues 573–595 (LLQTTNNSPMNSKPQQIKMQSTK) and 620–637 (DEASSLGTTQAATSSGLQ). The disordered stretch occupies residues 573 to 669 (LLQTTNNSPM…GACVTPASGC (97 aa)). The residue at position 580 (Ser-580) is a Phosphoserine. Residues 646–657 (GRRRGGQRHKVK) show a composition bias toward basic residues.

The protein belongs to the TRAFAC class translation factor GTPase superfamily. Classic translation factor GTPase family. GTPBP1 subfamily. In terms of assembly, interacts with EXOSC2/RRP4, EXOSC3/RRP40, EXOSC5/RRP46, HNRNPD, HNRNPR and SYNCRIP. Identified in a complex with HNRNPD, HNRNPL, HNRNPQ, HNRNPR, HNRNPU and AANAT mRNA, but does not bind mRNA by itself. In terms of tissue distribution, detected in pineal gland (at protein level).

It localises to the cytoplasm. In terms of biological role, promotes degradation of target mRNA species. Plays a role in the regulation of circadian mRNA stability. Binds GTP and has GTPase activity. The sequence is that of GTP-binding protein 1 (Gtpbp1) from Rattus norvegicus (Rat).